Here is a 1426-residue protein sequence, read N- to C-terminus: Homeobox protein cut-like 2 (1426 aa).

The disordered stretch occupies residues 77 to 104; sequence PEPPSAREQNEGTCPTGHTPANGNHLPG. The residue at position 81 (serine 81) is a Phosphoserine. The stretch at 131–311 forms a coiled coil; the sequence is ITLAARLGEA…IKTELSILRA (181 aa). Disordered stretches follow at residues 351–419, 460–488, 599–628, 653–676, 743–769, and 904–977; these read ALLA…FPSL, KPPS…GPEE, EIES…STSE, ESGP…TASQ, YASV…PRGD, and LGQG…SSSQ. Pro residues predominate over residues 374 to 395; that stretch reads PPYPPQLPPPPGPEDPLSPSPA. 2 stretches are compositionally biased toward low complexity: residues 397–408 and 460–470; these read PLLGPSLGPDGP and KPPSAPAASVP. The CUT 1 DNA-binding region spans 482-569; the sequence is DGAGPEEEQL…VLALRTIQVR (88 aa). A coiled-coil region spans residues 587-655; the sequence is DAIKSILEQA…QQALLEMESG (69 aa). Over residues 608–628 the composition is skewed to polar residues; that stretch reads SKNSPASVSIPNGTASSSTSE. Composition is skewed to low complexity over residues 743–757, 910–928, and 965–976; these read YASV…SSYS, QAPT…EPTS, and SSSLGGKPFSSS. A DNA-binding region (CUT 2) is located at residues 828-915; it reads QYELYMYREV…QGQGQAPTQQ (88 aa). Positions 983–1070 form a DNA-binding region, CUT 3; sequence QEMVAMSPEL…VEKLRDMKKL (88 aa). Positions 1113–1172 form a DNA-binding region, homeobox; it reads AKKPRVVLAPAEKEALRKAYQLEPYPSQQTIELLSFQLNLKTNTVINWFHNYRSRMRREM. The interval 1177 to 1392 is disordered; that stretch reads TQDDPDFDPS…AALHPSTKVN (216 aa). Basic and acidic residues-rich tracts occupy residues 1233 to 1245 and 1260 to 1274; these read APDR…KQEE and DPDR…EHTH. The segment covering 1318–1332 has biased composition (low complexity); the sequence is LSFKSTSESSCCSLE. The segment covering 1338–1350 has biased composition (polar residues); that stretch reads PSVISSPDLTTCV. Residues 1351–1364 are compositionally biased toward low complexity; sequence SPAPSSSAPISPSL.

It belongs to the CUT homeobox family. In terms of tissue distribution, restricted to neural tissues. Expressed exclusively in the central and peripheral nervous systems.

It localises to the nucleus. In terms of biological role, transcription factor involved in the control of neuronal proliferation and differentiation in the brain. Regulates dendrite development and branching, dendritic spine formation, and synaptogenesis in cortical layers II-III. Binds to DNA in a sequence-specific manner. The chain is Homeobox protein cut-like 2 (Cux2) from Mus musculus (Mouse).